The following is a 248-amino-acid chain: tRNA (guanine-N(1)-)-methyltransferase (248 aa).

S-adenosyl-L-methionine-binding positions include G113 and I133–L138.

This sequence belongs to the RNA methyltransferase TrmD family. Homodimer.

It is found in the cytoplasm. It carries out the reaction guanosine(37) in tRNA + S-adenosyl-L-methionine = N(1)-methylguanosine(37) in tRNA + S-adenosyl-L-homocysteine + H(+). In terms of biological role, specifically methylates guanosine-37 in various tRNAs. This Shewanella frigidimarina (strain NCIMB 400) protein is tRNA (guanine-N(1)-)-methyltransferase.